Here is a 299-residue protein sequence, read N- to C-terminus: Circadian clock oscillator protein KaiA (299 aa).

The 169-residue stretch at 1-169 (MVSKLSLYLV…RLAEKLRERL (169 aa)) folds into the KaiA N-terminal domain. The segment at 3-135 (SKLSLYLVTP…LHLAPSCALS (133 aa)) is psR domain, binds oxidized quinones. The segment at 170 to 178 (GYLGVYYKR) is flexible linker. The KaiA C-terminal domain occupies 179 to 287 (NPKYFYRSLS…CEMYRRSIPR (109 aa)).

As to quaternary structure, homodimer. The KaiABC complex composition changes during the circadian cycle to control KaiC phosphorylation. Complexes KaiC(6), KaiA(2-4):KaiC(6), KaiB(6):KaiC(6) and KaiC(6):KaiB(6):KaiA(12) are among the most important forms, many form cooperatively. KaiA and CikA bind to the same region of the KaiB(fs) form and therefore compete.

Its function is as follows. Key component of the KaiABC oscillator complex, which constitutes the main circadian regulator in cyanobacteria. Complex composition changes during the circadian cycle to control KaiC phosphorylation. KaiA stimulates KaiC autophosphorylation, while KaiB sequesters KaiA, leading to KaiC autodephosphorylation. KaiA binding to the KaiC CII domain during the subjective day yields KaiA(2-4):KaiC(6) complexes which stimulate KaiC autophosphorylation. Phospho-Ser-431 KaiC accumulation triggers binding of KaiB during the subjective night to form the KaiB(6):KaiC(6) complex, leading to changes in the output regulators CikA and SasA. KaiB(6):KaiC(6) formation exposes a site for KaiA binding on KaiB that sequesters KaiA from KaiC's CII domain, making the KaiC(6):KaiB(6):KaiA(12) complex resulting in KaiC autodephosphorylation. Complete dephosphorylation of KaiC leads to dissociation of KaiA(2):KaiB(1), completing 1 cycle of the Kai oscillator. Binds oxidized quinones via the N-terminal PsR domain, allowing it to sense redox changes and possibly mediate clock input. This Picosynechococcus sp. (strain ATCC 27264 / PCC 7002 / PR-6) (Agmenellum quadruplicatum) protein is Circadian clock oscillator protein KaiA.